Reading from the N-terminus, the 222-residue chain is Triosephosphate isomerase (222 aa).

Residue 9 to 11 (NYK) coordinates substrate. Catalysis depends on histidine 93, which acts as the Electrophile. The active-site Proton acceptor is the glutamate 141. Substrate-binding positions include isoleucine 146, glycine 181, and 202–203 (AS).

It belongs to the triosephosphate isomerase family. Homotetramer; dimer of dimers.

It localises to the cytoplasm. The enzyme catalyses D-glyceraldehyde 3-phosphate = dihydroxyacetone phosphate. It participates in carbohydrate biosynthesis; gluconeogenesis. Its pathway is carbohydrate degradation; glycolysis; D-glyceraldehyde 3-phosphate from glycerone phosphate: step 1/1. Its function is as follows. Involved in the gluconeogenesis. Catalyzes stereospecifically the conversion of dihydroxyacetone phosphate (DHAP) to D-glyceraldehyde-3-phosphate (G3P). The polypeptide is Triosephosphate isomerase (Methanosarcina acetivorans (strain ATCC 35395 / DSM 2834 / JCM 12185 / C2A)).